The chain runs to 320 residues: ATP-dependent 6-phosphofructokinase (320 aa).

Gly-12 lines the ATP pocket. Residues 22-26 (RGVVR) and 55-60 (RYSVSD) each bind ADP. ATP contacts are provided by residues 73 to 74 (RF) and 103 to 106 (GDGS). Asp-104 contributes to the Mg(2+) binding site. 126 to 128 (TID) contributes to the substrate binding site. Asp-128 acts as the Proton acceptor in catalysis. Arg-155 provides a ligand contact to ADP. Substrate-binding positions include Arg-163 and 170-172 (MGR). ADP contacts are provided by residues 186 to 188 (GCE), Lys-212, and 214 to 216 (KKH). Substrate is bound by residues Glu-223, Arg-244, and 250–253 (HIQR).

Belongs to the phosphofructokinase type A (PFKA) family. ATP-dependent PFK group I subfamily. Prokaryotic clade 'B1' sub-subfamily. Homotetramer. Requires Mg(2+) as cofactor.

The protein localises to the cytoplasm. It carries out the reaction beta-D-fructose 6-phosphate + ATP = beta-D-fructose 1,6-bisphosphate + ADP + H(+). The protein operates within carbohydrate degradation; glycolysis; D-glyceraldehyde 3-phosphate and glycerone phosphate from D-glucose: step 3/4. Allosterically activated by ADP and other diphosphonucleosides, and allosterically inhibited by phosphoenolpyruvate. Its function is as follows. Catalyzes the phosphorylation of D-fructose 6-phosphate to fructose 1,6-bisphosphate by ATP, the first committing step of glycolysis. The sequence is that of ATP-dependent 6-phosphofructokinase from Buchnera aphidicola subsp. Acyrthosiphon pisum (strain 5A).